The following is a 241-amino-acid chain: Chromosome partition protein MukE (241 aa).

Positions 207–241 are disordered; sequence DGEAATPDSLSQEKSAVKNDEEIEDELDEGLGEEE. Acidic residues predominate over residues 227-241; sequence EEIEDELDEGLGEEE.

The protein belongs to the MukE family. In terms of assembly, interacts, and probably forms a ternary complex, with MukF and MukB. The complex formation is stimulated by calcium or magnesium.

Its subcellular location is the cytoplasm. The protein resides in the nucleoid. Involved in chromosome condensation, segregation and cell cycle progression. May participate in facilitating chromosome segregation by condensation DNA from both sides of a centrally located replisome during cell division. Probably acts via its interaction with MukB and MukF. The polypeptide is Chromosome partition protein MukE (Mannheimia succiniciproducens (strain KCTC 0769BP / MBEL55E)).